Reading from the N-terminus, the 268-residue chain is GTP cyclohydrolase FolE2 (268 aa).

Belongs to the GTP cyclohydrolase IV family.

It catalyses the reaction GTP + H2O = 7,8-dihydroneopterin 3'-triphosphate + formate + H(+). It participates in cofactor biosynthesis; 7,8-dihydroneopterin triphosphate biosynthesis; 7,8-dihydroneopterin triphosphate from GTP: step 1/1. Its function is as follows. Converts GTP to 7,8-dihydroneopterin triphosphate. The sequence is that of GTP cyclohydrolase FolE2 from Paraburkholderia phymatum (strain DSM 17167 / CIP 108236 / LMG 21445 / STM815) (Burkholderia phymatum).